A 101-amino-acid polypeptide reads, in one-letter code: Small ribosomal subunit protein uS14 (101 aa).

Residues 1 to 10 (MAKKSSIEKN) show a composition bias toward basic and acidic residues. The tract at residues 1-23 (MAKKSSIEKNNRRRKMTKNAAPK) is disordered. Residues 11–23 (NRRRKMTKNAAPK) are compositionally biased toward basic residues.

It belongs to the universal ribosomal protein uS14 family. Part of the 30S ribosomal subunit. Contacts proteins S3 and S10.

Its function is as follows. Binds 16S rRNA, required for the assembly of 30S particles and may also be responsible for determining the conformation of the 16S rRNA at the A site. The chain is Small ribosomal subunit protein uS14 from Rhodopseudomonas palustris (strain BisB5).